The primary structure comprises 401 residues: Probable trafficking protein particle complex subunit 13 homolog (401 aa).

It belongs to the TRAPPC13 family.

The sequence is that of Probable trafficking protein particle complex subunit 13 homolog from Caenorhabditis briggsae.